The chain runs to 266 residues: Ribonuclease 3 (266 aa).

The 125-residue stretch at 34 to 158 (IERCQEILGY…VIAALYIDGG (125 aa)) folds into the RNase III domain. Glutamate 72 contributes to the Mg(2+) binding site. Aspartate 76 is a catalytic residue. Mg(2+) contacts are provided by aspartate 144 and glutamate 147. Glutamate 147 is an active-site residue. The DRBM domain maps to 185 to 254 (NHKSVLQQFA…AANALAELHN (70 aa)).

It belongs to the ribonuclease III family. In terms of assembly, homodimer. Requires Mg(2+) as cofactor.

It is found in the cytoplasm. It catalyses the reaction Endonucleolytic cleavage to 5'-phosphomonoester.. Functionally, digests double-stranded RNA. Involved in the processing of primary rRNA transcript to yield the immediate precursors to the large and small rRNAs (23S and 16S). Processes some mRNAs, and tRNAs when they are encoded in the rRNA operon. Processes pre-crRNA and tracrRNA of type II CRISPR loci if present in the organism. This is Ribonuclease 3 from Rhodopirellula baltica (strain DSM 10527 / NCIMB 13988 / SH1).